A 117-amino-acid polypeptide reads, in one-letter code: Large ribosomal subunit protein uL18 (117 aa).

Belongs to the universal ribosomal protein uL18 family. As to quaternary structure, part of the 50S ribosomal subunit; part of the 5S rRNA/L5/L18/L25 subcomplex. Contacts the 5S and 23S rRNAs.

Its function is as follows. This is one of the proteins that bind and probably mediate the attachment of the 5S RNA into the large ribosomal subunit, where it forms part of the central protuberance. The protein is Large ribosomal subunit protein uL18 of Laribacter hongkongensis (strain HLHK9).